The chain runs to 149 residues: Large ribosomal subunit protein bL9 (149 aa).

This sequence belongs to the bacterial ribosomal protein bL9 family.

Binds to the 23S rRNA. The protein is Large ribosomal subunit protein bL9 of Salinibacter ruber (strain DSM 13855 / M31).